A 1083-amino-acid polypeptide reads, in one-letter code: DNA primase (1083 aa).

Residues 1022-1061 form a CHC2-type zinc finger; that stretch reads CLRYPHRGGRTAPRTFVSLRVDHHNRLCISLAQQCFATKC.

It belongs to the herpesviridae DNA primase family. As to quaternary structure, associates with the helicase and the primase-associated factor to form the helicase-primase factor.

The protein resides in the host nucleus. Its function is as follows. Essential component of the helicase/primase complex. Unwinds the DNA at the replication forks and generates single-stranded DNA for both leading and lagging strand synthesis. The primase initiates primer synthesis and thereby produces large amount of short RNA primers on the lagging strand that the polymerase elongates using dNTPs. This chain is DNA primase, found in Varicella-zoster virus (strain Oka vaccine) (HHV-3).